A 299-amino-acid polypeptide reads, in one-letter code: Coenzyme PQQ synthesis protein B (299 aa).

It belongs to the PqqB family.

It functions in the pathway cofactor biosynthesis; pyrroloquinoline quinone biosynthesis. In terms of biological role, may be involved in the transport of PQQ or its precursor to the periplasm. This chain is Coenzyme PQQ synthesis protein B, found in Methylorubrum extorquens (strain ATCC 14718 / DSM 1338 / JCM 2805 / NCIMB 9133 / AM1) (Methylobacterium extorquens).